The chain runs to 204 residues: Large ribosomal subunit protein bL25 (204 aa).

This sequence belongs to the bacterial ribosomal protein bL25 family. CTC subfamily. As to quaternary structure, part of the 50S ribosomal subunit; part of the 5S rRNA/L5/L18/L25 subcomplex. Contacts the 5S rRNA. Binds to the 5S rRNA independently of L5 and L18.

Its function is as follows. This is one of the proteins that binds to the 5S RNA in the ribosome where it forms part of the central protuberance. The protein is Large ribosomal subunit protein bL25 of Wolbachia sp. subsp. Brugia malayi (strain TRS).